We begin with the raw amino-acid sequence, 295 residues long: Cell shape-determining protein MreC (295 aa).

An N-terminal signal peptide occupies residues 1–34 (MPQFFLNKRLIILLISIIVLVALVGFSLRDRENA). Residues 66 to 112 (VVDLKNTYTENQHLKERLEELAQLESEVADLKKENKDLKESLDITDS) adopt a coiled-coil conformation. The disordered stretch occupies residues 276 to 295 (SAEAGTTDDDTTSSDTTGGQ).

The protein belongs to the MreC family. As to quaternary structure, homooligomer of 24 subunits, arranged as 12 dimers.

Functionally, involved in formation and maintenance of cell shape. In Listeria monocytogenes serovar 1/2a (strain ATCC BAA-679 / EGD-e), this protein is Cell shape-determining protein MreC.